A 258-amino-acid polypeptide reads, in one-letter code: UPF0246 protein MS0374 (258 aa).

The protein belongs to the UPF0246 family.

This chain is UPF0246 protein MS0374, found in Mannheimia succiniciproducens (strain KCTC 0769BP / MBEL55E).